Reading from the N-terminus, the 295-residue chain is Ankyrin repeat and SOCS box protein 17 (295 aa).

Residues 146–176 form an ANK repeat; that stretch reads SGITPLFYVAQTRQSNIFKILLQYGILEREK. The SOCS box domain maps to 232–295; the sequence is LGRHPIISNW…RLQNYLNLEI (64 aa).

It belongs to the ankyrin SOCS box (ASB) family. In terms of tissue distribution, specifically expressed in testis. Not detected in other tissues tested.

Its pathway is protein modification; protein ubiquitination. In terms of biological role, may be a substrate-recognition component of a SCF-like ECS (Elongin-Cullin-SOCS-box protein) E3 ubiquitin-protein ligase complex which mediates the ubiquitination and subsequent proteasomal degradation of target proteins. This chain is Ankyrin repeat and SOCS box protein 17 (ASB17), found in Homo sapiens (Human).